Consider the following 951-residue polypeptide: Valine--tRNA ligase (951 aa).

The short motif at 42-52 (PNVTGSLHMGH) is the 'HIGH' region element. Positions 554-558 (KMSKS) match the 'KMSKS' region motif. Lys-557 contributes to the ATP binding site. Positions 882–944 (LINKDDELAR…AEAKAKLIEQ (63 aa)) form a coiled coil.

Belongs to the class-I aminoacyl-tRNA synthetase family. ValS type 1 subfamily. As to quaternary structure, monomer.

The protein resides in the cytoplasm. The catalysed reaction is tRNA(Val) + L-valine + ATP = L-valyl-tRNA(Val) + AMP + diphosphate. Functionally, catalyzes the attachment of valine to tRNA(Val). As ValRS can inadvertently accommodate and process structurally similar amino acids such as threonine, to avoid such errors, it has a 'posttransfer' editing activity that hydrolyzes mischarged Thr-tRNA(Val) in a tRNA-dependent manner. This is Valine--tRNA ligase from Salmonella choleraesuis (strain SC-B67).